A 269-amino-acid polypeptide reads, in one-letter code: GTP cyclohydrolase FolE2 (269 aa).

The protein belongs to the GTP cyclohydrolase IV family.

The enzyme catalyses GTP + H2O = 7,8-dihydroneopterin 3'-triphosphate + formate + H(+). The protein operates within cofactor biosynthesis; 7,8-dihydroneopterin triphosphate biosynthesis; 7,8-dihydroneopterin triphosphate from GTP: step 1/1. Its function is as follows. Converts GTP to 7,8-dihydroneopterin triphosphate. This Thiobacillus denitrificans (strain ATCC 25259 / T1) protein is GTP cyclohydrolase FolE2.